The sequence spans 181 residues: Large ribosomal subunit protein uL5 (181 aa).

Belongs to the universal ribosomal protein uL5 family. Part of the 50S ribosomal subunit; contacts the 5S rRNA and probably tRNA. Forms a bridge to the 30S subunit in the 70S ribosome.

Its function is as follows. This is one of the proteins that bind and probably mediate the attachment of the 5S RNA into the large ribosomal subunit, where it forms part of the central protuberance. In the 70S ribosome it contacts protein S13 of the 30S subunit (bridge B1b), connecting the 2 subunits; this bridge is implicated in subunit movement. May contact the P site tRNA; the 5S rRNA and some of its associated proteins might help stabilize positioning of ribosome-bound tRNAs. The chain is Large ribosomal subunit protein uL5 from Methanococcus maripaludis (strain C5 / ATCC BAA-1333).